A 394-amino-acid chain; its full sequence is NAD(P)H-quinone oxidoreductase subunit H (394 aa).

It belongs to the complex I 49 kDa subunit family. As to quaternary structure, NDH-1 can be composed of about 15 different subunits; different subcomplexes with different compositions have been identified which probably have different functions.

The protein resides in the cellular thylakoid membrane. It carries out the reaction a plastoquinone + NADH + (n+1) H(+)(in) = a plastoquinol + NAD(+) + n H(+)(out). It catalyses the reaction a plastoquinone + NADPH + (n+1) H(+)(in) = a plastoquinol + NADP(+) + n H(+)(out). NDH-1 shuttles electrons from an unknown electron donor, via FMN and iron-sulfur (Fe-S) centers, to quinones in the respiratory and/or the photosynthetic chain. The immediate electron acceptor for the enzyme in this species is believed to be plastoquinone. Couples the redox reaction to proton translocation, and thus conserves the redox energy in a proton gradient. Cyanobacterial NDH-1 also plays a role in inorganic carbon-concentration. The sequence is that of NAD(P)H-quinone oxidoreductase subunit H from Prochlorococcus marinus (strain MIT 9211).